We begin with the raw amino-acid sequence, 437 residues long: Epsilon-sarcoglycan (437 aa).

Over 1–317 (MLLFWWWELG…LKSRDYYTDF (317 aa)) the chain is Extracellular. N-linked (GlcNAc...) asparagine glycosylation occurs at N200. The helical transmembrane segment at 318–338 (LVTLAVPSAVALVLFLILAYI) threads the bilayer. Residues 339-437 (MCCRREGVEK…QPQTTGKWYP (99 aa)) lie on the Cytoplasmic side of the membrane.

It belongs to the sarcoglycan alpha/epsilon family. N-glycosylated. Post-translationally, ubiquitinated, leading to its degradation by the proteasome. In terms of tissue distribution, identified in all tissues tested. Expression highest in lung and placenta, moderate in brain, heart and skeletal muscle, low in kidney and liver. Also detected in embryo.

It localises to the cell membrane. The protein localises to the sarcolemma. It is found in the golgi apparatus. The protein resides in the cell projection. Its subcellular location is the dendrite. It localises to the cytoplasm. The protein localises to the cytoskeleton. Component of the sarcoglycan complex, a subcomplex of the dystrophin-glycoprotein complex which forms a link between the F-actin cytoskeleton and the extracellular matrix. This Mus musculus (Mouse) protein is Epsilon-sarcoglycan (Sgce).